A 771-amino-acid polypeptide reads, in one-letter code: MPTGLGYDFLRPVEDSGINDLKHYYFMADLADGQPLGRANLYSVCFDLATTDRKLTPAWRTTIKRWFPGFMTFRFLECGLLTMVSNPLALRSDTDLERVLPVLAGQMDQLAHDDGSDFLMIRDVDPEHYQRYLDILRPLGFRPALGFSRVDTTISWSSVEEALGCLSHKRRLPLKTSLEFRERFGIEVEELDEYAEHAPVLARLWRNVKTEAKDYQREDLNPEFFAACSRHLHGRSRLWLFRYQGTPIAFFLNVWGADENYILLEWGIDRDFEHYRKANLYRAALMLSLKDAISRDKRRMEMGITNYFTKLRIPGARVIPTIYFLRHSTDPVHTATLARMMMHNIQRPTLPDDMSEEFCRWEERIRLDQDGLPEHDIFRKIDRQHKYTGLKLGGVYGFYPRFTGPQRSTVKAAELGEIVLLGTNSYLGLATHPEVVEASAEATRRYGTGCSGSPLLNGTLDLHVSLEQELACFLGKPAAVLCSTGYQSNLAAISALCESGDMIIQDALNHRSLFDAARLSGADFTLYRHNDMDHLARVLRRTEGRRRIIVVDAVFSMEGTVADLATIAELADRHGCRVYVDESHALGVLGPDGRGASAALGVLARMDVVMGTFSKSFASVGGFIAGDRPVVDYIRHNGSGHVFSASLPPAAAAATHAALRVSRREPDRRARVLAAAEYMATGLARQGYQAEYHGTAIVPVILGNPTVAHAGYLRLMRSGVYVNPVAPPAVPEERSGFRTSYLADHRQSDLDRALHVFAGLAEDLTPQGAAL.

The interval 1–418 (MPTGLGYDFL…TVKAAELGEI (418 aa)) is unknown. Arg407 contributes to the substrate binding site. A KAPA synthase region spans residues 419–771 (VLLGTNSYLG…EDLTPQGAAL (353 aa)). 485–486 (GY) provides a ligand contact to pyridoxal 5'-phosphate. Residue His510 coordinates substrate. Pyridoxal 5'-phosphate contacts are provided by residues Ser556 and 581-584 (DESH). At Lys615 the chain carries N6-(pyridoxal phosphate)lysine.

It in the C-terminal section; belongs to the class-II pyridoxal-phosphate-dependent aminotransferase family. BioF subfamily. Requires pyridoxal 5'-phosphate as cofactor.

It carries out the reaction 6-carboxyhexanoyl-[ACP] + L-alanine + H(+) = (8S)-8-amino-7-oxononanoate + holo-[ACP] + CO2. In terms of biological role, catalyzes the decarboxylative condensation of pimeloyl-[acyl-carrier protein] and L-alanine to produce 8-amino-7-oxononanoate (AON), [acyl-carrier protein], and carbon dioxide. The chain is Putative 8-amino-7-oxononanoate synthase 2 (bioF2) from Mycobacterium tuberculosis (strain CDC 1551 / Oshkosh).